The following is a 351-amino-acid chain: Phenoloxidase-activating factor 3 (351 aa).

The signal sequence occupies residues 1 to 19; it reads MWLSLVILGVASAIVNVST. N-linked (GlcNAc...) asparagine glycosylation is present at Asn16. One can recognise a Clip domain in the interval 22-73; it reads SCTTPNGETATCLPIESCKIFWDYVVTSGADPEINSFLRASLCRQGNYVVCC. Cystine bridges form between Cys23/Cys72, Cys33/Cys64, Cys39/Cys73, Cys89/Cys224, Cys127/Cys143, Cys167/Cys176, Cys268/Cys285, and Cys295/Cys326. Residues 97 to 350 form the Peptidase S1 domain; it reads VLGGEDTDLG…HLDWIKQNVR (254 aa). His142 (charge relay system) is an active-site residue. The Ca(2+) site is built by Glu158, Asp160, Ala163, and Asp166. Catalysis depends on Asp204, which acts as the Charge relay system. Ser299 acts as the Charge relay system in catalysis.

Belongs to the peptidase S1 family. CLIP subfamily. In the active form, heterodimer of a light chain and a heavy chain; disulfide-linked. In terms of processing, proteolytically cleaved.

It localises to the secreted. With respect to regulation, cleavage of PPAF2 is Ca(2+)-independent. Inhibited by heparin. Its function is as follows. Serine endopeptidase which, by cleaving prophenoloxidase activating factor PPAF2, is required for the activation of the prophenoloxidase cascade probably following the recognition of pathogen-derived products. This Holotrichia diomphalia (Korean black chafer) protein is Phenoloxidase-activating factor 3.